Consider the following 46-residue polypeptide: MMFEFNMAELLRHRWGRLRLYRFPGSVLTDYRILKNYAKTLTGAGV.

To equivalent protein in phage 82.

This is an uncharacterized protein from Escherichia coli (strain K12).